A 328-amino-acid polypeptide reads, in one-letter code: Hydrogenase-2 operon protein HybA (328 aa).

A signal peptide spans 1–27 (MNRRNFIKAASCGALLTGALPSVSHAA). 3 4Fe-4S ferredoxin-type domains span residues 38 to 68 (LGML…RNPQ), 103 to 134 (NGYA…KDPK), and 136 to 165 (GIVH…YDYN). [4Fe-4S] cluster contacts are provided by Cys47, Cys50, Cys53, Cys57, Cys112, Cys115, Cys120, Cys124, Cys145, Cys148, Cys151, Cys155, Cys174, Cys177, Cys193, and Cys197.

[4Fe-4S] cluster is required as a cofactor.

It localises to the periplasm. Participates in the periplasmic electron-transferring activity of hydrogenase 2 during its catalytic turnover. The protein is Hydrogenase-2 operon protein HybA (hybA) of Escherichia coli O157:H7.